The sequence spans 69 residues: uncharacterized protein (69 aa).

This is an uncharacterized protein from Saccharomyces cerevisiae (strain ATCC 204508 / S288c) (Baker's yeast).